Here is a 500-residue protein sequence, read N- to C-terminus: Probable malate:quinone oxidoreductase (500 aa).

This sequence belongs to the MQO family. Requires FAD as cofactor.

It carries out the reaction (S)-malate + a quinone = a quinol + oxaloacetate. It participates in carbohydrate metabolism; tricarboxylic acid cycle; oxaloacetate from (S)-malate (quinone route): step 1/1. The polypeptide is Probable malate:quinone oxidoreductase (Bacillus anthracis (strain A0248)).